The primary structure comprises 285 residues: uncharacterized protein (285 aa).

His-110, Asp-131, His-133, Asp-135, Asp-214, and Asp-216 together coordinate Mn(2+).

The protein belongs to the arginase family. The cofactor is Mn(2+).

This is an uncharacterized protein from Methanothermus fervidus.